Reading from the N-terminus, the 394-residue chain is MKATIFFLLLTVLAHSRSQYHYQGLMNYLENRMLAMEERIALWHEQNNRYNSDLKEFRQQAADLLEKLSKDHSKLRSDLEGAGARVDRVEREMDYIETKNPPKPCVKAADKMVEQDAVIKEKKKEEFFELSVCVNIISSLKAMKILKRLGSPKGLWTKDARSAKIYVFNGTSDNTLYEFSSMRELSSSSGVSKGKQITVPTAWNGTGHAVYDGFLYYISESSELQVVKYDLTNSSVADTAVLPMEERSPVYQLNPETLVDLVADEDGLWALYPAGDTINLAKMDSNSLDIEQMWDTACPRSNAEAAFIVCGTVYVVYNTKPPSRSRVQCVFDVNDMVSNGEAPLIYFPRRYGAHSSLKYNPEERQLYAWDDGYQILYKLELKKKLWAVMPPPEE.

Positions methionine 1–serine 18 are cleaved as a signal peptide. Residues leucine 29 to aspartate 94 are a coiled coil. An Olfactomedin-like domain is found at valine 132 to lysine 383. An intrachain disulfide couples cysteine 133 to cysteine 310. Asparagine 169, asparagine 204, and asparagine 233 each carry an N-linked (GlcNAc...) asparagine glycan.

This sequence belongs to the OLFML3 family.

Its subcellular location is the secreted. Secreted scaffold protein that plays an essential role in dorsoventral patterning during early development. Stabilizes axial formation by restricting chordin (CHRD) activity on the dorsal side. Acts by facilitating the association between the tolloid proteases and their substrate chordin (CHRD), leading to enhance chordin (CHRD) degradation. The protein is Olfactomedin-like protein 3B (olfml3b) of Danio rerio (Zebrafish).